A 270-amino-acid polypeptide reads, in one-letter code: Endochitinase PR4 (270 aa).

A signal peptide spans 1–23 (MGNKLVLVLVAVALVMGPKNVSA). A Chitin-binding type-1 domain is found at 24-58 (QNCGCAEGLCCSQYGYCGTGEDYCGTGCQQGPCTT). Intrachain disulfides connect Cys26-Cys34, Cys28-Cys40, Cys33-Cys47, Cys51-Cys56, Cys88-Cys137, Cys150-Cys160, and Cys238-Cys270. Catalysis depends on Glu132, which acts as the Proton donor.

This sequence belongs to the glycosyl hydrolase 19 family. Chitinase class I subfamily.

It carries out the reaction Random endo-hydrolysis of N-acetyl-beta-D-glucosaminide (1-&gt;4)-beta-linkages in chitin and chitodextrins.. Its function is as follows. Defense against chitin-containing fungal pathogens. The sequence is that of Endochitinase PR4 (CHI4) from Phaseolus vulgaris (Kidney bean).